The primary structure comprises 269 residues: Hydroxyethylthiazole kinase (269 aa).

Position 46 (methionine 46) interacts with substrate. Arginine 122 and threonine 168 together coordinate ATP. Position 195 (glycine 195) interacts with substrate.

This sequence belongs to the Thz kinase family. Mg(2+) serves as cofactor.

The catalysed reaction is 5-(2-hydroxyethyl)-4-methylthiazole + ATP = 4-methyl-5-(2-phosphooxyethyl)-thiazole + ADP + H(+). It participates in cofactor biosynthesis; thiamine diphosphate biosynthesis; 4-methyl-5-(2-phosphoethyl)-thiazole from 5-(2-hydroxyethyl)-4-methylthiazole: step 1/1. Catalyzes the phosphorylation of the hydroxyl group of 4-methyl-5-beta-hydroxyethylthiazole (THZ). The polypeptide is Hydroxyethylthiazole kinase (Geobacillus kaustophilus (strain HTA426)).